Reading from the N-terminus, the 159-residue chain is Cathelicidin-5 (159 aa).

An N-terminal signal peptide occupies residues 1-29 (METQRASLSLGRWSLWLLLLGLALPSASA). Q30 carries the pyrrolidone carboxylic acid modification. A propeptide spanning residues 30–131 (QALSYREAVL…DITCAVPQSV (102 aa)) is cleaved from the precursor. 2 cysteine pairs are disulfide-bonded: C86–C97 and C108–C125.

This sequence belongs to the cathelicidin family.

The protein localises to the secreted. In terms of biological role, exerts a potent antimicrobial activity against Gram-negative and Gram-positive bacteria, including methicillin-resistant Staphylococcus aureus, and fungi. The polypeptide is Cathelicidin-5 (CATHL5) (Bos taurus (Bovine)).